The primary structure comprises 511 residues: Ribonuclease Y (511 aa).

The chain crosses the membrane as a helical span at residues 2–22 (ITTVIIAIVCFAVGGGLSYML). Positions 201 to 261 (SVTVFHIESD…VRREIARLAL (61 aa)) constitute a KH domain. One can recognise an HD domain in the interval 327-420 (LLQHARETAN…VQVCDAISGA (94 aa)).

Belongs to the RNase Y family.

It localises to the cell membrane. Endoribonuclease that initiates mRNA decay. This chain is Ribonuclease Y, found in Phocaeicola vulgatus (strain ATCC 8482 / DSM 1447 / JCM 5826 / CCUG 4940 / NBRC 14291 / NCTC 11154) (Bacteroides vulgatus).